Consider the following 1379-residue polypeptide: DNA-directed RNA polymerase subunit beta (1379 aa).

Belongs to the RNA polymerase beta chain family. The RNAP catalytic core consists of 2 alpha, 1 beta, 1 beta' and 1 omega subunit. When a sigma factor is associated with the core the holoenzyme is formed, which can initiate transcription.

The enzyme catalyses RNA(n) + a ribonucleoside 5'-triphosphate = RNA(n+1) + diphosphate. Its function is as follows. DNA-dependent RNA polymerase catalyzes the transcription of DNA into RNA using the four ribonucleoside triphosphates as substrates. The sequence is that of DNA-directed RNA polymerase subunit beta from Rhizobium etli (strain ATCC 51251 / DSM 11541 / JCM 21823 / NBRC 15573 / CFN 42).